Here is a 128-residue protein sequence, read N- to C-terminus: LIM domain-containing protein 2 (128 aa).

Methionine 1 is modified (N-acetylmethionine). Residues 1–25 form a disordered region; it reads MFQAAGAAQATPSHEAKGSSGNSTV. An LIM zinc-binding domain is found at 39–99; sequence ETCAACQKTV…KPHFQQLFKS (61 aa). Zn(2+) contacts are provided by cysteine 41, cysteine 44, histidine 62, cysteine 65, cysteine 68, cysteine 71, cysteine 89, and histidine 92.

In terms of assembly, interacts with ILK.

Its subcellular location is the cytoplasm. It localises to the nucleus. In terms of biological role, acts as an activator of the protein-kinase ILK, thereby regulating cell motility. The chain is LIM domain-containing protein 2 (Limd2) from Rattus norvegicus (Rat).